A 403-amino-acid chain; its full sequence is Phosphoglycerate kinase (403 aa).

Substrate is bound by residues 24-26 (DLN), Arg39, 62-65 (HLGR), Arg121, and Arg161. Residues Lys211, Gly299, Glu330, and 359–362 (GGDS) contribute to the ATP site.

Belongs to the phosphoglycerate kinase family. Monomer.

Its subcellular location is the cytoplasm. The enzyme catalyses (2R)-3-phosphoglycerate + ATP = (2R)-3-phospho-glyceroyl phosphate + ADP. Its pathway is carbohydrate degradation; glycolysis; pyruvate from D-glyceraldehyde 3-phosphate: step 2/5. This is Phosphoglycerate kinase from Corynebacterium jeikeium (strain K411).